Here is a 490-residue protein sequence, read N- to C-terminus: Chromosomal replication initiator protein DnaA (490 aa).

Residues 1-75 are domain I, interacts with DnaA modulators; that stretch reads MAVSSDAEQK…SELWKQEDAD (75 aa). The tract at residues 75–145 is domain II; it reads DLLKIEIVVR…SEFRHNVLGS (71 aa). The domain III, AAA+ region stretch occupies residues 146–368; that stretch reads PLDPRYTFGS…GAFNQLLFRQ (223 aa). ATP-binding residues include glycine 192, glycine 194, lysine 195, and threonine 196. A domain IV, binds dsDNA region spans residues 369–490; the sequence is SFEPQITIDR…LLRRLINDQA (122 aa).

It belongs to the DnaA family. As to quaternary structure, oligomerizes as a right-handed, spiral filament on DNA at oriC.

The protein localises to the cytoplasm. Plays an essential role in the initiation and regulation of chromosomal replication. ATP-DnaA binds to the origin of replication (oriC) to initiate formation of the DNA replication initiation complex once per cell cycle. Binds the DnaA box (a 9 base pair repeat at the origin) and separates the double-stranded (ds)DNA. Forms a right-handed helical filament on oriC DNA; dsDNA binds to the exterior of the filament while single-stranded (ss)DNA is stabiized in the filament's interior. The ATP-DnaA-oriC complex binds and stabilizes one strand of the AT-rich DNA unwinding element (DUE), permitting loading of DNA polymerase. After initiation quickly degrades to an ADP-DnaA complex that is not apt for DNA replication. Binds acidic phospholipids. The protein is Chromosomal replication initiator protein DnaA of Mesorhizobium japonicum (strain LMG 29417 / CECT 9101 / MAFF 303099) (Mesorhizobium loti (strain MAFF 303099)).